The chain runs to 472 residues: Cysteine--tRNA ligase (472 aa).

Residue C29 coordinates Zn(2+). Residues 31-41 carry the 'HIGH' region motif; sequence PTVYNYIHIGN. Zn(2+) contacts are provided by C214, H239, and E243. The 'KMSKS' region motif lies at 273–277; it reads KMSKS. K276 lines the ATP pocket.

Belongs to the class-I aminoacyl-tRNA synthetase family. In terms of assembly, monomer. It depends on Zn(2+) as a cofactor.

It localises to the cytoplasm. It carries out the reaction tRNA(Cys) + L-cysteine + ATP = L-cysteinyl-tRNA(Cys) + AMP + diphosphate. This chain is Cysteine--tRNA ligase, found in Lactobacillus gasseri (strain ATCC 33323 / DSM 20243 / BCRC 14619 / CIP 102991 / JCM 1131 / KCTC 3163 / NCIMB 11718 / NCTC 13722 / AM63).